The following is a 372-amino-acid chain: Cyclic GMP-AMP synthase-like receptor (372 aa).

T68 serves as a coordination point for GTP. Residues S70 and 82-84 contribute to the ATP site; that span reads EFD. Positions 82, 84, and 190 each coordinate Mg(2+). GTP is bound by residues D190 and 236-243; that span reads LVCAPYWE. ATP is bound by residues 240–243, K261, and 274–278; these read PYWE and SYTIK.

This sequence belongs to the mab-21 family. The cofactor is Mg(2+). Mn(2+) serves as cofactor.

It catalyses the reaction GTP + ATP = 3',2'-cGAMP + 2 diphosphate. The enzyme catalyses GTP + ATP = pppA(2'-5')pG + diphosphate. It carries out the reaction pppA(2'-5')pG = 3',2'-cGAMP + diphosphate. Its activity is regulated as follows. The enzyme activity is specifically activated by double-stranded RNA (dsRNA). Functionally, nucleotidyltransferase that catalyzes the formation of cyclic GMP-AMP (3',2'-cGAMP) from ATP and GTP and plays a key role in innate immunity. Synthesizes 3',2'-cGAMP in a two-step reaction through production of the linear intermediate pppA(2'-5')pG. Acts as a key sensor of double-stranded RNA (dsRNA), the presence of dsRNA in the cytoplasm being a danger signal that triggers the immune responses. Directly binds dsRNA longer than 15 bp, activating the nucleotidyltransferase activity, leading to synthesis of 3',2'-cGAMP, a second messenger that binds to and activates Sting, thereby triggering the antiviral immune response via activation of the NF-kappa-B transcription factor Rel (Relish). The chain is Cyclic GMP-AMP synthase-like receptor from Drosophila eugracilis (Fruit fly).